We begin with the raw amino-acid sequence, 99 residues long: Defensin-A4 (99 aa).

A signal peptide spans Met1 to Gly21. The propeptide occupies Ala22–Val68. Cystine bridges form between Cys73–Cys97, Cys75–Cys89, and Cys79–Cys96.

It belongs to the alpha-defensin family. In terms of tissue distribution, lowly expressed in spleen, and expressed at lower levels in kidney and lung.

It is found in the secreted. Has antimicrobial activity. In Ornithorhynchus anatinus (Duckbill platypus), this protein is Defensin-A4.